Reading from the N-terminus, the 140-residue chain is FK506-binding protein 2 (140 aa).

The first 19 residues, 1-19 (MKFTTGLSVLLFFVLQVFA), serve as a signal peptide directing secretion. Residues 43 to 132 (GDVVSVHYTG…IFETELVDIQ (90 aa)) form the PPIase FKBP-type domain.

Belongs to the FKBP-type PPIase family. FKBP2 subfamily.

It localises to the endoplasmic reticulum. It carries out the reaction [protein]-peptidylproline (omega=180) = [protein]-peptidylproline (omega=0). Inhibited by both FK506 and rapamycin. PPIases accelerate the folding of proteins. It catalyzes the cis-trans isomerization of proline imidic peptide bonds in oligopeptides. The chain is FK506-binding protein 2 (FPR2) from Kluyveromyces lactis (strain ATCC 8585 / CBS 2359 / DSM 70799 / NBRC 1267 / NRRL Y-1140 / WM37) (Yeast).